Here is a 355-residue protein sequence, read N- to C-terminus: Blue-sensitive opsin (355 aa).

Residues 1-41 (MKSRPQEFQEDFYIPIPLDTNNITALSPFLVPQDHLGGSGI) are Extracellular-facing. N-linked (GlcNAc...) asparagine glycosylation occurs at N22. The helical transmembrane segment at 42–66 (FMIMTVFMLFLFIGGTSINVLTIVC) threads the bilayer. Residues 67-78 (TVQYKKLRSHLN) lie on the Cytoplasmic side of the membrane. Residues 79–104 (YILVNLAISNLLVSTVGSFTAFVSFL) form a helical membrane-spanning segment. Over 105-118 (NRYFIFGPTACKIE) the chain is Extracellular. Cysteines 115 and 192 form a disulfide. A helical membrane pass occupies residues 119–138 (GFVATLGGMVSLWSLSVVAF). At 139–157 (ERWLVICKPVGNFSFKGTH) the chain is on the cytoplasmic side. Residues 158–181 (AIIGCALTWFFALLASTPPLFGWS) form a helical membrane-spanning segment. At 182–207 (RYIPEGLQCSCGPDWYTTENKYNNES) the chain is on the extracellular side. N-linked (GlcNAc...) asparagine glycosylation occurs at N205. The helical transmembrane segment at 208 to 235 (YVMFLFCFCFGFPFTVILFCYGQLLFTL) threads the bilayer. Topologically, residues 236-257 (KSAAKAQADSASTQKAEREVTK) are cytoplasmic. Residues 258–281 (MVVVMVMGFLVCWLPYASFALWVV) traverse the membrane as a helical segment. Over 282 to 289 (FNRGQSFD) the chain is Extracellular. The helical transmembrane segment at 290–314 (LRLGTIPSCFSKASTVYNPVIYVFM) threads the bilayer. K301 is modified (N6-(retinylidene)lysine). At 315–355 (NKQFRSCMMKLIFCGKSPFGDDEEASSSSQVTQVSSVGPEK) the chain is on the cytoplasmic side. Residues 334–355 (GDDEEASSSSQVTQVSSVGPEK) form a disordered region. The span at 340–355 (SSSSQVTQVSSVGPEK) shows a compositional bias: low complexity.

It belongs to the G-protein coupled receptor 1 family. Opsin subfamily. In terms of processing, phosphorylated on some or all of the serine and threonine residues present in the C-terminal region. As to expression, the color pigments are found in the cone photoreceptor cells.

It is found in the membrane. In terms of biological role, visual pigments are the light-absorbing molecules that mediate vision. They consist of an apoprotein, opsin, covalently linked to cis-retinal. This is Blue-sensitive opsin (B23) from Psalidodon fasciatus (Banded astyanax).